The sequence spans 787 residues: Penicillin-binding protein 1A (787 aa).

The Cytoplasmic portion of the chain corresponds to 1–6 (MYKSLF). Residues 7–27 (LCLKIFAVLILIGCSVTAYII) traverse the membrane as a helical; Signal-anchor for type II membrane protein segment. The Periplasmic segment spans residues 28 to 787 (YHYSHDLPDY…GMLDQSQEIY (760 aa)). The segment at 49 to 220 (TRIYSRDGKL…SELNPDKNYS (172 aa)) is transglycosylase. Glu87 functions as the Proton donor; for transglycosylase activity in the catalytic mechanism. The transpeptidase stretch occupies residues 398-711 (DVIVVEPIKD…SNVVLPIFID (314 aa)). The Acyl-ester intermediate; for transpeptidase activity role is filled by Ser457.

It in the N-terminal section; belongs to the glycosyltransferase 51 family. The protein in the C-terminal section; belongs to the transpeptidase family.

Its subcellular location is the cell inner membrane. The enzyme catalyses [GlcNAc-(1-&gt;4)-Mur2Ac(oyl-L-Ala-gamma-D-Glu-L-Lys-D-Ala-D-Ala)](n)-di-trans,octa-cis-undecaprenyl diphosphate + beta-D-GlcNAc-(1-&gt;4)-Mur2Ac(oyl-L-Ala-gamma-D-Glu-L-Lys-D-Ala-D-Ala)-di-trans,octa-cis-undecaprenyl diphosphate = [GlcNAc-(1-&gt;4)-Mur2Ac(oyl-L-Ala-gamma-D-Glu-L-Lys-D-Ala-D-Ala)](n+1)-di-trans,octa-cis-undecaprenyl diphosphate + di-trans,octa-cis-undecaprenyl diphosphate + H(+). The catalysed reaction is Preferential cleavage: (Ac)2-L-Lys-D-Ala-|-D-Ala. Also transpeptidation of peptidyl-alanyl moieties that are N-acyl substituents of D-alanine.. The protein operates within cell wall biogenesis; peptidoglycan biosynthesis. Functionally, cell wall formation. Synthesis of cross-linked peptidoglycan from the lipid intermediates. The enzyme has a penicillin-insensitive transglycosylase N-terminal domain (formation of linear glycan strands) and a penicillin-sensitive transpeptidase C-terminal domain (cross-linking of the peptide subunits). The polypeptide is Penicillin-binding protein 1A (mrcA) (Rickettsia prowazekii (strain Madrid E)).